The primary structure comprises 618 residues: Matrix metalloproteinase-24 (618 aa).

Residues 1 to 41 (MPRSRGGRAAPGQAARWSGWRAPGRLLPLLPALCCLAAAAG) form the signal peptide. Positions 42 to 128 (AGKPAGADAP…HLSRRRRNKR (87 aa)) are excised as a propeptide. The Extracellular portion of the chain corresponds to 42–575 (AGKPAGADAP…IDDVPGSVNA (534 aa)). The Cysteine switch signature appears at 110–117 (PRCGVPDH). Zn(2+)-binding residues include Cys112 and His255. The active site involves Glu256. Zn(2+)-binding residues include His259 and His265. Residues 296–352 (QKIYGPPAEPLEPTRPLPTLPVRRIHSPSERKHERQPRPPRPPLGDRPSTPGAKPNI) form a disordered region. Residues 302-314 (PAEPLEPTRPLPT) are compositionally biased toward pro residues. The span at 322–332 (SPSERKHERQP) shows a compositional bias: basic and acidic residues. Hemopexin repeat units lie at residues 350-398 (PNIC…WKGL), 399-444 (PARI…GSCL), 446-494 (REGI…KGIP), and 495-542 (QAPQ…WMGC). Residues Cys353 and Cys542 are joined by a disulfide bond. A helical membrane pass occupies residues 576–596 (VAVVVPCTLSLCLLVLLYTIF). At 597-618 (QFKNKTGPQPVTYYKRPVQEWV) the chain is on the cytoplasmic side. The PDZ-binding motif lies at 616 to 618 (EWV).

Belongs to the peptidase M10A family. In terms of assembly, interacts (via PDZ-binding motif) with APBA3 (via PDZ domain). Interacts with GRIP1 and GRIP2. The cofactor is Zn(2+). It depends on Ca(2+) as a cofactor. Post-translationally, cleaved by a furin endopeptidase in the trans-Golgi network. As to expression, predominantly expressed in the nervous system: while enriched in the central nervous system, expression is also detected in the peripheral nervous system, including the trigeminal ganglion. Expression is not restricted to the nervous system: it is also enriched in the thymus, with a lower level of expression present in the aorta. In brain, high expression is present in the brain parenchyma, particularly within the neocortex.

Its subcellular location is the cell membrane. It localises to the golgi apparatus. The protein resides in the trans-Golgi network membrane. The protein localises to the secreted. It is found in the extracellular space. Its subcellular location is the extracellular matrix. In terms of biological role, metalloprotease that mediates cleavage of N-cadherin (CDH2) and acts as a regulator of neuro-immune interactions and neural stem cell quiescence. Involved in cell-cell interactions between nociceptive neurites and mast cells, possibly by mediating cleavage of CDH2, thereby acting as a mediator of peripheral thermal nociception and inflammatory hyperalgesia. Key regulator of neural stem cells quiescence by mediating cleavage of CDH2, affecting CDH2-mediated anchorage of neural stem cells to ependymocytes in the adult subependymal zone, leading to modulate their quiescence. May play a role in axonal growth. Able to activate progelatinase A. May also be a proteoglycanase involved in degradation of proteoglycans, such as dermatan sulfate and chondroitin sulfate proteoglycans. Cleaves partially fibronectin, but not collagen type I, nor laminin. This is Matrix metalloproteinase-24 (Mmp24) from Rattus norvegicus (Rat).